The following is a 156-amino-acid chain: ATP synthase subunit b (156 aa).

The chain crosses the membrane as a helical span at residues 12-32; sequence IAFAIFVWFCVKYVWPPITAA.

Belongs to the ATPase B chain family. In terms of assembly, F-type ATPases have 2 components, F(1) - the catalytic core - and F(0) - the membrane proton channel. F(1) has five subunits: alpha(3), beta(3), gamma(1), delta(1), epsilon(1). F(0) has three main subunits: a(1), b(2) and c(10-14). The alpha and beta chains form an alternating ring which encloses part of the gamma chain. F(1) is attached to F(0) by a central stalk formed by the gamma and epsilon chains, while a peripheral stalk is formed by the delta and b chains.

It is found in the cell inner membrane. Its function is as follows. F(1)F(0) ATP synthase produces ATP from ADP in the presence of a proton or sodium gradient. F-type ATPases consist of two structural domains, F(1) containing the extramembraneous catalytic core and F(0) containing the membrane proton channel, linked together by a central stalk and a peripheral stalk. During catalysis, ATP synthesis in the catalytic domain of F(1) is coupled via a rotary mechanism of the central stalk subunits to proton translocation. In terms of biological role, component of the F(0) channel, it forms part of the peripheral stalk, linking F(1) to F(0). The protein is ATP synthase subunit b of Marinobacter nauticus (strain ATCC 700491 / DSM 11845 / VT8) (Marinobacter aquaeolei).